Reading from the N-terminus, the 582-residue chain is WD repeat-containing protein JIP5 (582 aa).

5 WD repeats span residues 27–68, 125–168, 177–216, 265–310, and 373–410; these read KYPE…EAQS, RHKG…VLSK, DKNDAITKLVHSTSHPFLLSGTENGDVLVYDSNNMASNQL, DQED…LMDQ, and GPADEVGILDIDYDYRLISAGMDSLKIWSNQEETLNSD. Disordered regions lie at residues 405 to 496 and 531 to 582; these read ETLN…DTEL and TKEQ…FDDL. 2 stretches are compositionally biased toward acidic residues: residues 410–438 and 447–485; these read DSDDSDSDDSDSDIGSNDSEDSDSDDDDV and EVNDFSPDSDSETGNDDSDENLEDVADSDSNEDQIENVT. Basic and acidic residues-rich tracts occupy residues 531–540 and 570–582; these read TKEQSTKKAD and QKHEHGIRRFDDL.

This sequence belongs to the WD repeat WDR55 family.

It is found in the nucleus. Its subcellular location is the nucleolus. The polypeptide is WD repeat-containing protein JIP5 (JIP5) (Debaryomyces hansenii (strain ATCC 36239 / CBS 767 / BCRC 21394 / JCM 1990 / NBRC 0083 / IGC 2968) (Yeast)).